Here is a 295-residue protein sequence, read N- to C-terminus: GTP-binding protein GEM (295 aa).

The segment at 39–64 is disordered; that stretch reads CNLRNRHSTAPEEHCRRSWSSDSTDS. Residues 81–88 and 190–193 contribute to the GTP site; these read GEQGVGKS and NKSD. Residues 265-284 are calmodulin-binding; it reads ARRFWGKIVAKNNKNMAFKL.

Belongs to the small GTPase superfamily. RGK family. Interacts with calmodulin in a Ca(2+)-dependent manner. Calmodulin binding significantly decreases GTP binding. Binds ROCK1. In terms of processing, phosphorylated on tyrosine residues.

The protein localises to the cell membrane. Functionally, could be a regulatory protein, possibly participating in receptor-mediated signal transduction at the plasma membrane. Has guanine nucleotide-binding activity but undetectable intrinsic GTPase activity. The polypeptide is GTP-binding protein GEM (Gem) (Mus musculus (Mouse)).